Here is a 199-residue protein sequence, read N- to C-terminus: Thymidine kinase (199 aa).

Residues 15 to 22 (GSMFSGKS) and 88 to 91 (DEVQ) contribute to the ATP site. Glu89 serves as the catalytic Proton acceptor. Cys145, Cys148, Cys183, and His186 together coordinate Zn(2+).

It belongs to the thymidine kinase family. Homotetramer.

The protein localises to the cytoplasm. The catalysed reaction is thymidine + ATP = dTMP + ADP + H(+). The sequence is that of Thymidine kinase from Staphylococcus saprophyticus subsp. saprophyticus (strain ATCC 15305 / DSM 20229 / NCIMB 8711 / NCTC 7292 / S-41).